The following is a 473-amino-acid chain: Photosystem II CP43 reaction center protein (473 aa).

Residues 1–14 (MKTLYSRRRFYHVE) constitute a propeptide that is removed on maturation. At Thr15 the chain carries N-acetylthreonine. Phosphothreonine is present on Thr15. The next 5 helical transmembrane spans lie at 69-93 (LFEV…PHLA), 134-155 (LLGP…KDRN), 178-200 (KALY…RKIT), 255-275 (KPFA…LSYS), and 291-312 (WFNN…ASQA). Glu367 lines the [CaMn4O5] cluster pocket. A helical membrane pass occupies residues 447-471 (RARAAAAGFEKGIDRDFEPVLSMTP).

This sequence belongs to the PsbB/PsbC family. PsbC subfamily. As to quaternary structure, PSII is composed of 1 copy each of membrane proteins PsbA, PsbB, PsbC, PsbD, PsbE, PsbF, PsbH, PsbI, PsbJ, PsbK, PsbL, PsbM, PsbT, PsbX, PsbY, PsbZ, Psb30/Ycf12, at least 3 peripheral proteins of the oxygen-evolving complex and a large number of cofactors. It forms dimeric complexes. The cofactor is Binds multiple chlorophylls and provides some of the ligands for the Ca-4Mn-5O cluster of the oxygen-evolving complex. It may also provide a ligand for a Cl- that is required for oxygen evolution. PSII binds additional chlorophylls, carotenoids and specific lipids..

The protein resides in the plastid. It is found in the chloroplast thylakoid membrane. Its function is as follows. One of the components of the core complex of photosystem II (PSII). It binds chlorophyll and helps catalyze the primary light-induced photochemical processes of PSII. PSII is a light-driven water:plastoquinone oxidoreductase, using light energy to abstract electrons from H(2)O, generating O(2) and a proton gradient subsequently used for ATP formation. In Solanum bulbocastanum (Wild potato), this protein is Photosystem II CP43 reaction center protein.